Here is an 828-residue protein sequence, read N- to C-terminus: Putative alpha-1,3-mannosyltransferase MNN12 (828 aa).

The Cytoplasmic portion of the chain corresponds to 1–13 (MIEKLTIKRSRQK). Residues 14–34 (VIAYSVIIIWLMIVNIWLLNN) traverse the membrane as a helical segment. The Lumenal portion of the chain corresponds to 35–828 (YHLNSSTLTR…YYGDVWVGME (794 aa)). N-linked (GlcNAc...) asparagine glycosylation occurs at asparagine 38. Residues 80 to 104 (HQEEDVPNSQSTDNSLIKPTSPAKN) are disordered. The segment covering 86–103 (PNSQSTDNSLIKPTSPAK) has biased composition (polar residues). 3 N-linked (GlcNAc...) asparagine glycosylation sites follow: asparagine 247, asparagine 437, and asparagine 591.

This sequence belongs to the MNN1/MNT family.

Its subcellular location is the golgi apparatus membrane. It functions in the pathway protein modification; protein glycosylation. Its function is as follows. Responsible for addition of the terminal mannose residues to the outer chain of core N-linked polysaccharides and to O-linked mannotriose. Implicated in late Golgi modifications. This chain is Putative alpha-1,3-mannosyltransferase MNN12 (MNN12), found in Candida albicans (strain SC5314 / ATCC MYA-2876) (Yeast).